The sequence spans 229 residues: Uracil-DNA glycosylase (229 aa).

D65 serves as the catalytic Proton acceptor.

This sequence belongs to the uracil-DNA glycosylase (UDG) superfamily. UNG family.

It is found in the cytoplasm. It catalyses the reaction Hydrolyzes single-stranded DNA or mismatched double-stranded DNA and polynucleotides, releasing free uracil.. In terms of biological role, excises uracil residues from the DNA which can arise as a result of misincorporation of dUMP residues by DNA polymerase or due to deamination of cytosine. The protein is Uracil-DNA glycosylase of Oceanobacillus iheyensis (strain DSM 14371 / CIP 107618 / JCM 11309 / KCTC 3954 / HTE831).